A 474-amino-acid polypeptide reads, in one-letter code: Protein NAR1 (474 aa).

8 residues coordinate [4Fe-4S] cluster: cysteine 24, cysteine 61, cysteine 64, cysteine 67, cysteine 177, cysteine 233, cysteine 390, and cysteine 394.

Belongs to the NARF family. In terms of assembly, part of a complex composed of AE7, CIA1, MMS19 and NAR1. Interacts with CIA1. Expressed in developing tissues, including shoot apex, young leaves, vascular tissues, root tips, pedicels, carpels and developing seeds.

It localises to the nucleus. Its subcellular location is the cytoplasm. Its function is as follows. Essential component of the cytosolic iron-sulfur (Fe-S) protein assembly (CIA) machinery. Required for the maturation of extramitochondrial Fe/S proteins. Required for expression of the imprinted FWA gene, for seed development and is involved in the oxidative stress response in vegetative tissues. Involved in the regulation of cell size, ploidy and cell cycle progression. Required for growth under normoxic conditions and necessary for recovery after hypoxic treatment but its action is reactive oxygen species (ROS) independent. The protein is Protein NAR1 of Arabidopsis thaliana (Mouse-ear cress).